Here is a 642-residue protein sequence, read N- to C-terminus: Threonine--tRNA ligase (642 aa).

Residues 1–61 (MPVIRFCDGS…TEDSSISFIS (61 aa)) form the TGS domain. Residues 243–534 (DHRKIGKLLN…LIEEFSGKLP (292 aa)) are catalytic. Residues cysteine 334, histidine 385, and histidine 511 each coordinate Zn(2+).

Belongs to the class-II aminoacyl-tRNA synthetase family. In terms of assembly, homodimer. The cofactor is Zn(2+).

It localises to the cytoplasm. The catalysed reaction is tRNA(Thr) + L-threonine + ATP = L-threonyl-tRNA(Thr) + AMP + diphosphate + H(+). In terms of biological role, catalyzes the attachment of threonine to tRNA(Thr) in a two-step reaction: L-threonine is first activated by ATP to form Thr-AMP and then transferred to the acceptor end of tRNA(Thr). Also edits incorrectly charged L-seryl-tRNA(Thr). This is Threonine--tRNA ligase from Buchnera aphidicola subsp. Schizaphis graminum (strain Sg).